The chain runs to 663 residues: Methionine--tRNA ligase (663 aa).

Residues 10–20 carry the 'HIGH' region motif; sequence AYTNGPLHLGH. Zn(2+) contacts are provided by C142, C145, C154, and C157. Residues 323–327 carry the 'KMSKS' region motif; that stretch reads KMSTS. T326 contacts ATP. Positions 563–663 constitute a tRNA-binding domain; that stretch reads YFGNVDLRVG…RDLPVGSKIH (101 aa).

The protein belongs to the class-I aminoacyl-tRNA synthetase family. MetG type 1 subfamily. As to quaternary structure, homodimer. Requires Zn(2+) as cofactor.

It is found in the cytoplasm. The enzyme catalyses tRNA(Met) + L-methionine + ATP = L-methionyl-tRNA(Met) + AMP + diphosphate. In terms of biological role, is required not only for elongation of protein synthesis but also for the initiation of all mRNA translation through initiator tRNA(fMet) aminoacylation. In Methanococcus maripaludis (strain C7 / ATCC BAA-1331), this protein is Methionine--tRNA ligase.